A 40-amino-acid polypeptide reads, in one-letter code: uncharacterized protein (40 aa).

This is an uncharacterized protein from Streptomyces peucetius.